The sequence spans 256 residues: Proteasome subunit alpha (256 aa).

The interval glutamate 235–aspartate 256 is disordered.

The protein belongs to the peptidase T1A family. As to quaternary structure, the 20S proteasome core is composed of 14 alpha and 14 beta subunits that assemble into four stacked heptameric rings, resulting in a barrel-shaped structure. The two inner rings, each composed of seven catalytic beta subunits, are sandwiched by two outer rings, each composed of seven alpha subunits. The catalytic chamber with the active sites is on the inside of the barrel. Has a gated structure, the ends of the cylinder being occluded by the N-termini of the alpha-subunits. Is capped by the proteasome-associated ATPase, ARC.

It is found in the cytoplasm. It functions in the pathway protein degradation; proteasomal Pup-dependent pathway. The formation of the proteasomal ATPase ARC-20S proteasome complex, likely via the docking of the C-termini of ARC into the intersubunit pockets in the alpha-rings, may trigger opening of the gate for substrate entry. Interconversion between the open-gate and close-gate conformations leads to a dynamic regulation of the 20S proteasome proteolysis activity. Its function is as follows. Component of the proteasome core, a large protease complex with broad specificity involved in protein degradation. This chain is Proteasome subunit alpha, found in Mycolicibacterium paratuberculosis (strain ATCC BAA-968 / K-10) (Mycobacterium paratuberculosis).